We begin with the raw amino-acid sequence, 273 residues long: DnaJ homolog subfamily C member 27-A (273 aa).

Residues 23–30, 71–75, and 134–137 each bind GTP; these read GNAEVGKS, DMAGH, and NKID. Positions 217 to 273 constitute a J domain; that stretch reads DSWDMLGVKPGATRDEVNKAYRKLAVLLHPDKCMAPGSEDAFKAVVNARTALLKNIK.

The protein belongs to the small GTPase superfamily. Rab family.

It is found in the nucleus. In terms of biological role, GTPase possibly involved in regulation of the MEK/ERK pathway. The polypeptide is DnaJ homolog subfamily C member 27-A (dnajc27-a) (Xenopus laevis (African clawed frog)).